The sequence spans 307 residues: Ninja-family protein 5 (307 aa).

Disordered regions lie at residues 1-159 (MASR…EHTV) and 173-208 (TAGS…EPQP). The segment covering 8 to 30 (GGFGRDGGQAPVGGAGAAPGPGG) has biased composition (gly residues). Composition is skewed to polar residues over residues 63–83 (QRSS…GTSC) and 173–183 (TAGSPTPSRPQ).

This sequence belongs to the Ninja family.

It is found in the nucleus. This chain is Ninja-family protein 5, found in Zea mays (Maize).